A 266-amino-acid chain; its full sequence is GFP-like fluorescent chromoprotein cFP484 (266 aa).

Positions glutamine 104–glycine 106 form a cross-link, 2-iminomethyl-5-imidazolinone (Gln-Gly). Position 105 is a 2,3-didehydrotyrosine (tyrosine 105).

This sequence belongs to the GFP family. Contains a chromophore consisting of modified amino acid residues. The chromophore is formed by autocatalytic backbone condensation between Xaa-N and Gly-(N+2), oxidation of Tyr-(N+1) to didehydrotyrosine, and formation of a double bond to the alpha-amino nitrogen of residue Xaa-N. Maturation of the chromophore requires nothing other than molecular oxygen. The precise stereochemistry of the tyrosine has not been determined. Tentacle and oral disk.

Its function is as follows. Pigment protein that is green in color. This is GFP-like fluorescent chromoprotein cFP484 from Clavularia sp. (Brown star polyp).